The following is a 221-amino-acid chain: GTP-binding nuclear protein Ran2 (221 aa).

Residues 10–174 enclose the Small GTPase Ran-type domain; sequence DYPSFKLVIV…LYLARKLAGD (165 aa). GTP is bound at residue 21 to 28; it reads DGGTGKTT. The interval 40–48 is switch-I; that stretch reads KKYEPTIGV. Residues glycine 71, 125–128, and 153–155 contribute to the GTP site; these read NKVD and SAK. Residues 71–87 form a switch-II region; the sequence is GQEKFGGLRDGYYIHGQ.

The protein belongs to the small GTPase superfamily. Ran family. Found in a nuclear export complex with RanGTP, exportin and pre-miRNA.

The protein resides in the nucleus. Functionally, GTP-binding protein involved in nucleocytoplasmic transport. Required for the import of protein into the nucleus and also for RNA export. Involved in chromatin condensation and control of cell cycle. The chain is GTP-binding nuclear protein Ran2 (RAN2) from Solanum lycopersicum (Tomato).